A 361-amino-acid chain; its full sequence is Chorismate synthase (361 aa).

2 residues coordinate NADP(+): Arg-48 and Arg-54. Residues 125–127 (RSS), 238–239 (NA), Gly-278, 293–297 (KPTSS), and Arg-319 each bind FMN.

Belongs to the chorismate synthase family. Homotetramer. FMNH2 serves as cofactor.

The enzyme catalyses 5-O-(1-carboxyvinyl)-3-phosphoshikimate = chorismate + phosphate. The protein operates within metabolic intermediate biosynthesis; chorismate biosynthesis; chorismate from D-erythrose 4-phosphate and phosphoenolpyruvate: step 7/7. Catalyzes the anti-1,4-elimination of the C-3 phosphate and the C-6 proR hydrogen from 5-enolpyruvylshikimate-3-phosphate (EPSP) to yield chorismate, which is the branch point compound that serves as the starting substrate for the three terminal pathways of aromatic amino acid biosynthesis. This reaction introduces a second double bond into the aromatic ring system. The protein is Chorismate synthase of Yersinia enterocolitica serotype O:8 / biotype 1B (strain NCTC 13174 / 8081).